Consider the following 501-residue polypeptide: Cytochrome P450 2S1 (501 aa).

Heme is bound at residue Cys441.

The protein belongs to the cytochrome P450 family. The cofactor is heme.

Its subcellular location is the endoplasmic reticulum membrane. It localises to the microsome membrane. It catalyses the reaction all-trans-retinoate + reduced [NADPH--hemoprotein reductase] + O2 = all-trans-5,6-epoxyretinoate + oxidized [NADPH--hemoprotein reductase] + H2O + H(+). The catalysed reaction is all-trans-retinoate + reduced [NADPH--hemoprotein reductase] + O2 = all-trans-4-hydroxyretinoate + oxidized [NADPH--hemoprotein reductase] + H2O + H(+). The enzyme catalyses (5S)-hydroperoxy-(6E,8Z,11Z,14Z)-eicosatetraenoate = 5-oxo-(6E,8Z,11Z,14Z)-eicosatetraenoate + H2O. It carries out the reaction (12S)-hydroperoxy-(5Z,8Z,10E,14Z)-eicosatetraenoate = 12-oxo-(5Z,8Z,10E,14Z)-eicosatetraenoate + H2O. It catalyses the reaction (15S)-hydroperoxy-(5Z,8Z,11Z,13E)-eicosatetraenoate = 15-oxo-(5Z,8Z,11Z,13E)-eicosatetraenoate + H2O. The catalysed reaction is prostaglandin H2 = thromboxane A2. The enzyme catalyses prostaglandin H2 = (12S)-hydroxy-(5Z,8E,10E)-heptadecatrienoate + malonaldehyde. It carries out the reaction (13S)-hydroperoxy-(9Z,11E)-octadecadienoate = 13-oxo-(9Z,11E)-octadecadienoate + H2O. The protein operates within lipid metabolism; fatty acid metabolism. Functionally, a cytochrome P450 monooxygenase involved in the metabolism of retinoids and eicosanoids. In epidermis, may contribute to the oxidative metabolism of all-trans-retinoic acid. For this activity, uses molecular oxygen inserting one oxygen atom into a substrate, and reducing the second into a water molecule, with two electrons provided by NADPH via cytochrome P450 reductase (NADPH--hemoprotein reductase). Additionally, displays peroxidase and isomerase activities toward various oxygenated eicosanoids such as prostaglandin H2 (PGH2) and hydroperoxyeicosatetraenoates (HPETEs). Independently of cytochrome P450 reductase, NADPH, and O2, catalyzes the breakdown of PGH2 to hydroxyheptadecatrienoic acid (HHT) and malondialdehyde (MDA), which is known to act as a mediator of DNA damage. The protein is Cytochrome P450 2S1 (Cyp2s1) of Mus musculus (Mouse).